Reading from the N-terminus, the 261-residue chain is Proteasome assembly chaperone 2 (261 aa).

Belongs to the PSMG2 family. Forms a heterodimer with psmg1. Post-translationally, degraded by the proteasome upon completion of 20S proteasome maturation.

It is found in the nucleus. Chaperone protein which promotes assembly of the 20S proteasome as part of a heterodimer with psmg1. The chain is Proteasome assembly chaperone 2 from Xenopus tropicalis (Western clawed frog).